Here is a 143-residue protein sequence, read N- to C-terminus: Antiholin-like protein LrgA (143 aa).

4 consecutive transmembrane segments (helical) span residues 6-26, 30-50, 61-81, and 97-117; these read VYSF…SNII, LPIP…LLCL, LGTA…ISVI, and VIVV…QFIL.

This sequence belongs to the CidA/LrgA family. LrgA subfamily.

It is found in the cell membrane. Its function is as follows. Inhibits the expression or activity of extracellular murein hydrolases by interacting, possibly with LrgB, with the holin-like protein CidA. The LrgAB and CidA proteins may affect the proton motive force of the membrane. May be involved in programmed cell death (PCD), possibly triggering PCD in response to antibiotics and environmental stresses. This Bacillus cereus (strain AH820) protein is Antiholin-like protein LrgA.